A 328-amino-acid chain; its full sequence is Formimidoylglutamase (328 aa).

Residues H133, D159, H161, D163, D253, and D255 each contribute to the Mn(2+) site.

It belongs to the arginase family. The cofactor is Mn(2+).

It catalyses the reaction N-formimidoyl-L-glutamate + H2O = formamide + L-glutamate. Its pathway is amino-acid degradation; L-histidine degradation into L-glutamate; L-glutamate from N-formimidoyl-L-glutamate (hydrolase route): step 1/1. Its function is as follows. Catalyzes the conversion of N-formimidoyl-L-glutamate to L-glutamate and formamide. The chain is Formimidoylglutamase from Streptococcus pyogenes serotype M5 (strain Manfredo).